The chain runs to 290 residues: 4-hydroxybenzoate octaprenyltransferase (290 aa).

Transmembrane regions (helical) follow at residues 21–41 (IGTLLLLWPTLWALFLSVKGM), 44–64 (LSILSIFVLGVIFMRAAGCVI), 84–104 (LATGAATPEEAKWLFVLLVFC), 106–126 (FILVLFLNTYAIVLSFIAVFL), 142–162 (LFLGMAFGWSIPMAYGASIEA), 212–232 (IISLLQIVTLFFLGLIGYLSQ), 235–255 (TSYFVVLFLATLLFVYQCKLI), and 267–287 (FLNNNYFGAMVFVAFLFGIFF).

It belongs to the UbiA prenyltransferase family. The cofactor is Mg(2+).

The protein localises to the cell inner membrane. The enzyme catalyses all-trans-octaprenyl diphosphate + 4-hydroxybenzoate = 4-hydroxy-3-(all-trans-octaprenyl)benzoate + diphosphate. It functions in the pathway cofactor biosynthesis; ubiquinone biosynthesis. Its function is as follows. Catalyzes the prenylation of para-hydroxybenzoate (PHB) with an all-trans polyprenyl group. Mediates the second step in the final reaction sequence of ubiquinone-8 (UQ-8) biosynthesis, which is the condensation of the polyisoprenoid side chain with PHB, generating the first membrane-bound Q intermediate 3-octaprenyl-4-hydroxybenzoate. The sequence is that of 4-hydroxybenzoate octaprenyltransferase from Pasteurella multocida (strain Pm70).